The chain runs to 287 residues: Pyridoxal kinase PdxY (287 aa).

Substrate-binding positions include Ser-10 and Thr-45–Gln-46. ATP contacts are provided by residues Asp-112, Ala-144, Glu-149, Lys-182, and Arg-209–Val-212. Asp-224 is a binding site for substrate.

It belongs to the pyridoxine kinase family. PdxY subfamily. As to quaternary structure, homodimer. Mg(2+) is required as a cofactor.

The catalysed reaction is pyridoxal + ATP = pyridoxal 5'-phosphate + ADP + H(+). It functions in the pathway cofactor metabolism; pyridoxal 5'-phosphate salvage; pyridoxal 5'-phosphate from pyridoxal: step 1/1. Functionally, pyridoxal kinase involved in the salvage pathway of pyridoxal 5'-phosphate (PLP). Catalyzes the phosphorylation of pyridoxal to PLP. The protein is Pyridoxal kinase PdxY of Shigella sonnei (strain Ss046).